Here is a 309-residue protein sequence, read N- to C-terminus: Tagatose-6-phosphate kinase (309 aa).

This sequence belongs to the carbohydrate kinase PfkB family. LacC subfamily.

It catalyses the reaction D-tagatofuranose 6-phosphate + ATP = D-tagatofuranose 1,6-bisphosphate + ADP + H(+). It functions in the pathway carbohydrate metabolism; D-tagatose 6-phosphate degradation; D-glyceraldehyde 3-phosphate and glycerone phosphate from D-tagatose 6-phosphate: step 1/2. The sequence is that of Tagatose-6-phosphate kinase from Streptococcus pyogenes serotype M3 (strain SSI-1).